We begin with the raw amino-acid sequence, 1182 residues long: DNA-directed RNA polymerase subunit beta (1182 aa).

Residues 1150-1162 (DEEVEMKDEDDDN) are compositionally biased toward acidic residues. A disordered region spans residues 1150–1182 (DEEVEMKDEDDDNIPNATSALEQVVQPTVTEEE). Positions 1171 to 1182 (EQVVQPTVTEEE) are enriched in low complexity.

It belongs to the RNA polymerase beta chain family. The RNAP catalytic core consists of 2 alpha, 1 beta, 1 beta' and 1 omega subunit. When a sigma factor is associated with the core the holoenzyme is formed, which can initiate transcription.

It catalyses the reaction RNA(n) + a ribonucleoside 5'-triphosphate = RNA(n+1) + diphosphate. Functionally, DNA-dependent RNA polymerase catalyzes the transcription of DNA into RNA using the four ribonucleoside triphosphates as substrates. In Exiguobacterium sp. (strain ATCC BAA-1283 / AT1b), this protein is DNA-directed RNA polymerase subunit beta.